The sequence spans 262 residues: MTLSIPPSIQCQTEAACRLITRVTGDTLRAIHLYGSAVAGGLKPNSDIDLLVTICQPLTEAQRATLMQELLALSSPPGASAEKRALEVTVVLYSQLVPWCFPPSREMQFGEWLREDICQGIYEPAQQDWDMVLLITQILETSIPLKGERAERLFTPAPAAQLLKALRYPLDLWQSTADVQGDEYHIVLTLARIWYTLSTGRFTSKDAAADWLLPQLPEDYAATLRAAQREYLGLEQQDWHILLPAVVRFVDFAKAHIPTQFT.

Positions 1–157 (MTLSIPPSIQ…ERAERLFTPA (157 aa)) are adenylyltransferase domain. Residues serine 36, serine 46, and aspartate 47 each coordinate ATP. Mg(2+) contacts are provided by aspartate 47, aspartate 49, and glutamate 87. The active-site Proton acceptor is glutamate 87. Position 130 (aspartate 130) interacts with ATP. The tract at residues 158 to 262 (PAAQLLKALR…AKAHIPTQFT (105 aa)) is helical domain. Residues 173–178 (WQSTAD) and histidine 185 each bind streptomycin. Residues lysine 205 and tyrosine 231 each coordinate ATP.

In terms of assembly, monomer.

It carries out the reaction streptomycin + ATP = 3''-O-adenylylstreptomycin + diphosphate. It catalyses the reaction spectinomycin + ATP = 9-O-adenylylspectinomycin + diphosphate. Functionally, mediates bacterial resistance to the antibiotics streptomycin and spectinomycin, does not confer resistance to kanamycin. Binds ATP first, then antibiotic. The sequence is that of Aminoglycoside (3'') (9) adenylyltransferase (aadA) from Salmonella typhimurium (strain LT2 / SGSC1412 / ATCC 700720).